The sequence spans 580 residues: 2-succinyl-5-enolpyruvyl-6-hydroxy-3-cyclohexene-1-carboxylate synthase (580 aa).

This sequence belongs to the TPP enzyme family. MenD subfamily. As to quaternary structure, homodimer. Mg(2+) is required as a cofactor. Requires Mn(2+) as cofactor. Thiamine diphosphate serves as cofactor.

It carries out the reaction isochorismate + 2-oxoglutarate + H(+) = 5-enolpyruvoyl-6-hydroxy-2-succinyl-cyclohex-3-ene-1-carboxylate + CO2. The protein operates within quinol/quinone metabolism; 1,4-dihydroxy-2-naphthoate biosynthesis; 1,4-dihydroxy-2-naphthoate from chorismate: step 2/7. It functions in the pathway quinol/quinone metabolism; menaquinone biosynthesis. Its function is as follows. Catalyzes the thiamine diphosphate-dependent decarboxylation of 2-oxoglutarate and the subsequent addition of the resulting succinic semialdehyde-thiamine pyrophosphate anion to isochorismate to yield 2-succinyl-5-enolpyruvyl-6-hydroxy-3-cyclohexene-1-carboxylate (SEPHCHC). The polypeptide is 2-succinyl-5-enolpyruvyl-6-hydroxy-3-cyclohexene-1-carboxylate synthase (Bacillus pumilus (strain SAFR-032)).